The chain runs to 1368 residues: Protein suppressor 2 of zeste (1368 aa).

The segment at 35 to 74 (CRLCRGYMIDPTTVDYCYHTYCRSCILKHLLRAVYCPECK) adopts an RING-type zinc-finger fold. Disordered stretches follow at residues 245 to 321 (SRIN…FKSL), 448 to 628 (QPLQ…QQQQ), 640 to 718 (TLPT…AVPQ), 861 to 903 (AGGK…KRSC), 935 to 1001 (ALSG…NGTA), 1057 to 1103 (SANP…STSN), 1116 to 1141 (ISAN…GDDL), 1161 to 1193 (AASS…ASVR), 1211 to 1271 (STAA…KKPT), and 1298 to 1322 (VLSS…RPEP). Positions 449–461 (PLQQSASNPDSKY) are enriched in polar residues. Residues 462–495 (SPNASPMSSCSSSTNGSSSSLGTADASTSTSTSS) are compositionally biased toward low complexity. The span at 496–506 (SHRKRKKKHSK) shows a compositional bias: basic residues. Low complexity-rich tracts occupy residues 599–628 (AEPE…QQQQ) and 672–689 (PKQQ…VLQQ). 2 stretches are compositionally biased toward polar residues: residues 936-953 (LSGQ…NAYR) and 962-977 (LRNT…SKSS). Composition is skewed to low complexity over residues 1078–1099 (NNNN…NNNN), 1119–1138 (NSNG…TTNG), 1161–1183 (AASS…NANA), and 1231–1263 (STSN…ATSP).

It is found in the nucleus. In terms of biological role, regulates expression of the homeotic selector genes by influencing higher-order chromatin structure through interaction with other proteins. This is Protein suppressor 2 of zeste (Su(z)2) from Drosophila melanogaster (Fruit fly).